The sequence spans 130 residues: UPF0102 protein BT_1882 (130 aa).

This sequence belongs to the UPF0102 family.

The chain is UPF0102 protein BT_1882 from Bartonella tribocorum (strain CIP 105476 / IBS 506).